A 188-amino-acid chain; its full sequence is MSIKSDKWIRRMAEQHGMIEPFEPDQVRESDGRRIVSYGTSSYGYDIRCADEFKIFTNINSTIVDPKNFDEKSFVDFKGDVCIIPPNSFALARTMEYFRIPRTVLTVCLGKSTYARCGIIVNVTPFEPEWEGYVTLEFSNTTPLPAKIYAGEGCAQVLFFESDEECETSYKDRGGKYQGQHGVTLPKT.

DCTP is bound by residues 111-116 (KSTYAR), 135-137 (TLE), glutamine 156, tyrosine 170, and glutamine 180. Glutamate 137 (proton donor/acceptor) is an active-site residue.

It belongs to the dCTP deaminase family. Homotrimer.

The enzyme catalyses dCTP + H2O + H(+) = dUTP + NH4(+). The protein operates within pyrimidine metabolism; dUMP biosynthesis; dUMP from dCTP (dUTP route): step 1/2. Its function is as follows. Catalyzes the deamination of dCTP to dUTP. The sequence is that of dCTP deaminase from Ralstonia pickettii (strain 12J).